A 192-amino-acid chain; its full sequence is Peptidyl-tRNA hydrolase (192 aa).

A tRNA-binding site is contributed by tyrosine 18. Histidine 23 serves as the catalytic Proton acceptor. 3 residues coordinate tRNA: phenylalanine 69, asparagine 71, and asparagine 117.

This sequence belongs to the PTH family. Monomer.

It is found in the cytoplasm. The enzyme catalyses an N-acyl-L-alpha-aminoacyl-tRNA + H2O = an N-acyl-L-amino acid + a tRNA + H(+). Its function is as follows. Hydrolyzes ribosome-free peptidyl-tRNAs (with 1 or more amino acids incorporated), which drop off the ribosome during protein synthesis, or as a result of ribosome stalling. Catalyzes the release of premature peptidyl moieties from peptidyl-tRNA molecules trapped in stalled 50S ribosomal subunits, and thus maintains levels of free tRNAs and 50S ribosomes. This is Peptidyl-tRNA hydrolase from Neisseria meningitidis serogroup A / serotype 4A (strain DSM 15465 / Z2491).